Here is a 386-residue protein sequence, read N- to C-terminus: Glucose-1-phosphate adenylyltransferase (386 aa).

Alpha-D-glucose 1-phosphate contacts are provided by residues Tyr-100, Gly-165, 180 to 181 (EK), and Ser-191.

This sequence belongs to the bacterial/plant glucose-1-phosphate adenylyltransferase family. As to quaternary structure, homotetramer.

The catalysed reaction is alpha-D-glucose 1-phosphate + ATP + H(+) = ADP-alpha-D-glucose + diphosphate. The protein operates within glycan biosynthesis; glycogen biosynthesis. Functionally, involved in the biosynthesis of ADP-glucose, a building block required for the elongation reactions to produce glycogen. Catalyzes the reaction between ATP and alpha-D-glucose 1-phosphate (G1P) to produce pyrophosphate and ADP-Glc. This Clostridium botulinum (strain Eklund 17B / Type B) protein is Glucose-1-phosphate adenylyltransferase.